A 224-amino-acid polypeptide reads, in one-letter code: PHD finger-containing protein 5 (224 aa).

The PHD-type zinc finger occupies 31 to 81 (KKPCEVCGSDANELLMMTCFMCRDTREHTYCARVMFQRVPRLWICEECRDF). Zn(2+) is bound by residues Cys34, Cys37, Cys49, Cys52, His58, Cys61, Cys75, and Cys78. The disordered stretch occupies residues 116–137 (PRTNQVVDNHQDPPIDQTDPSS).

Interacts directly with AIPP3/BDT1.

Together with AIPP3/BDT1, cooperates to form a BAH-PHD bivalent histone reader complex able to read histone H3 lysine 27 trimethylation (H3K27me3) histone marks in order to regulate transcription, especially to prevent early flowering; promotes AIPP3/BDT1 binding to H3K27me3. This is PHD finger-containing protein 5 from Arabidopsis thaliana (Mouse-ear cress).